Consider the following 129-residue polypeptide: Putative F-box protein At3g42722 (129 aa).

The region spanning Met4–Asn50 is the F-box domain.

The protein is Putative F-box protein At3g42722 of Arabidopsis thaliana (Mouse-ear cress).